The primary structure comprises 297 residues: TATA-box-binding protein (297 aa).

Residues 52 to 116 (EEQQRQQQQA…ITPATPASES (65 aa)) are disordered. 2 stretches are compositionally biased toward low complexity: residues 56-78 (RQQQQAQQSTSQQGNQGSGQTPQ) and 104-114 (MTPITPATPAS). 2 consecutive repeat copies span residues 123-199 (LQNI…ARVV) and 213-290 (IQNM…YPIL).

It belongs to the TBP family. Belongs to the TFIID complex together with the TBP-associated factors (TAFs). Binds DNA as monomer. Post-translationally, the N-terminal domain is extensively phosphorylated.

The protein resides in the nucleus. In terms of biological role, general transcription factor that functions at the core of the DNA-binding multiprotein factor TFIID. Binding of TFIID to the TATA box is the initial transcriptional step of the pre-initiation complex (PIC), playing a role in the activation of eukaryotic genes transcribed by RNA polymerase II. Members of the TBP family are differentially required to regulate transcription and development during early embryogenesis. Binds to the promoters of select genes. The protein is TATA-box-binding protein of Xenopus tropicalis (Western clawed frog).